The sequence spans 294 residues: Non-selective voltage-gated ion channel VDAC2 (294 aa).

N-acetylalanine is present on alanine 2. Residues lysine 23 and lysine 31 each contribute to the ATP site. Lysine 31 is subject to N6-acetyllysine; alternate. The residue at position 31 (lysine 31) is an N6-succinyllysine; alternate. A Glycyl lysine isopeptide (Lys-Gly) (interchain with G-Cter in ubiquitin); alternate cross-link involves residue lysine 31. 2 beta stranded membrane passes run 37–46 (LVKLDVKTKS) and 50–58 (VEFSTSGSS). Glycyl lysine isopeptide (Lys-Gly) (interchain with G-Cter in ubiquitin) cross-links involve residues lysine 64 and lysine 72. A beta stranded transmembrane segment spans residues 65 to 75 (VTGTLETKYKW). Tyrosine 78 carries the post-translational modification Phosphotyrosine. 3 beta stranded membrane passes run 80–87 (LTFTEKWN), 91–100 (TLGTEIAIED), and 106–115 (LKLTFDTTFS). The residue at position 118 (threonine 118) is a Phosphothreonine. Lysine 120 carries the post-translational modification N6-acetyllysine; alternate. Lysine 120 is covalently cross-linked (Glycyl lysine isopeptide (Lys-Gly) (interchain with G-Cter in ubiquitin); alternate). Glycyl lysine isopeptide (Lys-Gly) (interchain with G-Cter in ubiquitin) cross-links involve residues lysine 121 and lysine 124. Beta stranded transmembrane passes span 122-131 (SGKIKSSYKR), 134-141 (INLGCDVD), 148-156 (AIHGSAVFG), and 161-169 (LAGYQMTFD). Residue lysine 172 forms a Glycyl lysine isopeptide (Lys-Gly) (interchain with G-Cter in ubiquitin) linkage. Beta stranded transmembrane passes span 174–186 (KLTR…GYRT), 189–196 (FQLHTNVN), 200–209 (EFGGSIYQKV), 213–222 (LDTSVNLAWT), 229–238 (RFGIAAKYQL), and 242–249 (ASISAKVN). At serine 251 the chain carries Phosphoserine. NAD(+) is bound by residues 253-255 (LIG) and 271-275 (SALVD). Transmembrane regions (beta stranded) follow at residues 253-262 (LIGVGYTQTL) and 265-274 (GVKLTLSALV). Position 277 is an N6-acetyllysine; alternate (lysine 277). Residue lysine 277 forms a Glycyl lysine isopeptide (Lys-Gly) (interchain with G-Cter in ubiquitin); alternate linkage. A beta stranded transmembrane segment spans residues 284 to 293 (HKVGLALELE). Residue lysine 285 forms a Glycyl lysine isopeptide (Lys-Gly) (interchain with G-Cter in ubiquitin) linkage.

Belongs to the eukaryotic mitochondrial porin family. Monomer, homodimer and higher order oligomers; formation of higher order structures is necessary for scramblase activity. Interacts with ARMC12 in a TBC1D21-dependent manner. Interacts with KLC3. Interacts with SPATA33. Interacts with PPP3CC in a SPATA33-dependent manner. Post-translationally, ubiquitinated by PRKN during mitophagy, leading to its degradation and enhancement of mitophagy. Deubiquitinated by USP30. In terms of tissue distribution, expressed in erythrocytes (at protein level). Expressed in all tissues examined.

The protein resides in the mitochondrion outer membrane. It is found in the membrane. The catalysed reaction is chloride(in) = chloride(out). It catalyses the reaction K(+)(in) = K(+)(out). It carries out the reaction a 1,2-diacyl-sn-glycero-3-phospho-L-serine(in) = a 1,2-diacyl-sn-glycero-3-phospho-L-serine(out). The enzyme catalyses a 1,2-diacyl-sn-glycero-3-phosphocholine(in) = a 1,2-diacyl-sn-glycero-3-phosphocholine(out). The catalysed reaction is a 1,2-diacyl-sn-glycero-3-phospho-(1D-myo-inositol)(in) = a 1,2-diacyl-sn-glycero-3-phospho-(1D-myo-inositol)(out). In terms of biological role, non-selective voltage-gated ion channel that mediates the transport of anions and cations through the mitochondrion outer membrane and plasma membrane. The channel adopts an open conformation at zero mV and a closed conformation at both positive and negative potentials. There are two populations of channels; the main that functions in a lower open-state conductance with lower ion selectivity, that switch, in a voltage-dependent manner, from the open to a low-conducting 'closed' state and the other that has a normal ion selectivity in the typical high conductance, 'open' state. Binds various lipids, including the sphingolipid ceramide, the phospholipid phosphatidylcholine, and the sterols cholesterol and oxysterol. Binding of ceramide promotes the mitochondrial outer membrane permeabilization (MOMP) apoptotic pathway. Functionally, catalyzes the scrambling of phospholipids across the outer mitochondrial membrane; the mechanism is unrelated to channel activity and is capable of translocating both anionic and zwitterionic phospholipids. The polypeptide is Non-selective voltage-gated ion channel VDAC2 (Homo sapiens (Human)).